The sequence spans 412 residues: G-protein coupled receptor homolog UL33 (412 aa).

Topologically, residues 1-29 are virion surface; it reads MDTIIHNSTRNNTPPHINDTCNMTGPLFA. Asn7, Asn18, and Asn22 each carry an N-linked (GlcNAc...) asparagine; by host glycan. The helical transmembrane segment at 30–54 threads the bilayer; that stretch reads IRTTEAVLNTFIIFVGGPLNAIVLI. The Intravirion segment spans residues 55 to 70; that stretch reads TQLLTNRVLGYSTPTI. A helical membrane pass occupies residues 71–95; that stretch reads YMTNLYSTNFLTLTVLPFIVLSNQW. Residues 96–102 are Virion surface-facing; that stretch reads LLPAGVA. The chain crosses the membrane as a helical span at residues 103-129; the sequence is SCKFLSVIYYSSCTVGFATVALIAADR. Cys104 and Cys188 are oxidised to a cystine. Residues 130–138 are Intravirion-facing; the sequence is YRVLHKRTY. Residues 139-160 traverse the membrane as a helical segment; the sequence is ARQSYRSTYMILLLTWLAGLIF. Over 161–203 the chain is Virion surface; the sequence is SVPAAVYTTVVMHHDANDTNNTNGHATCVLYFVAEEVHTVLLS. N-linked (GlcNAc...) asparagine; by host glycans are attached at residues Asn177 and Asn180. A helical transmembrane segment spans residues 204–224; it reads WKVLLTMVWGAAPVIMMTWFY. At 225–240 the chain is on the intravirion side; sequence AFFYSTVQRTSQKQRS. A helical membrane pass occupies residues 241–267; the sequence is RTLTFVSVLLISFVALQTPYVSLMIFN. Residues 268–281 lie on the Virion surface side of the membrane; that stretch reads SYATTAWPMQCEHL. A helical membrane pass occupies residues 282-305; that stretch reads TLRRTIGTLARVVPHLHCLINPIL. Residues 306–412 lie on the Intravirion side of the membrane; it reads YALLGHDFLQ…SQSHHNLSGV (107 aa). The interval 377 to 412 is disordered; it reads NFPSGTWKGGQKTASNDTSTKIPHRLSQSHHNLSGV. A compositionally biased stretch (polar residues) spans 388–397; that stretch reads KTASNDTSTK.

This sequence belongs to the G-protein coupled receptor 1 family. In terms of assembly, heterodimerizes with US28.

Its subcellular location is the virion. The protein localises to the host cell membrane. The protein resides in the host cytoplasm. Its function is as follows. G-protein-coupled receptor (vGPCR) that constitutively activates multiple oncogenic signaling pathways including STAT3, AP-1, phospholipase C, NF-kappa-B or cAMP-responsive element (CRE) pathways. Plays an important role in viral reactivation from latency through activation of host CREB1, facilitating its recruitment to the viral major immediate early (MIE) genes. In turn, expression of the MIE-driven genes such as UL123 are de-repressed. Also facilitates virus dissemination via the extracellular and cell-to-cell route. This chain is G-protein coupled receptor homolog UL33 (UL33), found in Human cytomegalovirus (strain AD169) (HHV-5).